Reading from the N-terminus, the 243-residue chain is Pyridoxine 5'-phosphate synthase (243 aa).

3-amino-2-oxopropyl phosphate is bound at residue Asn-6. 8–9 serves as a coordination point for 1-deoxy-D-xylulose 5-phosphate; it reads DH. Arg-17 is a binding site for 3-amino-2-oxopropyl phosphate. The Proton acceptor role is filled by His-42. 2 residues coordinate 1-deoxy-D-xylulose 5-phosphate: Arg-44 and His-49. Catalysis depends on Glu-72, which acts as the Proton acceptor. Thr-102 contributes to the 1-deoxy-D-xylulose 5-phosphate binding site. The active-site Proton donor is His-192. 3-amino-2-oxopropyl phosphate is bound by residues Gly-193 and 214–215; that span reads GH.

This sequence belongs to the PNP synthase family. As to quaternary structure, homooctamer; tetramer of dimers.

The protein localises to the cytoplasm. The enzyme catalyses 3-amino-2-oxopropyl phosphate + 1-deoxy-D-xylulose 5-phosphate = pyridoxine 5'-phosphate + phosphate + 2 H2O + H(+). The protein operates within cofactor biosynthesis; pyridoxine 5'-phosphate biosynthesis; pyridoxine 5'-phosphate from D-erythrose 4-phosphate: step 5/5. Functionally, catalyzes the complicated ring closure reaction between the two acyclic compounds 1-deoxy-D-xylulose-5-phosphate (DXP) and 3-amino-2-oxopropyl phosphate (1-amino-acetone-3-phosphate or AAP) to form pyridoxine 5'-phosphate (PNP) and inorganic phosphate. This Sulfurihydrogenibium sp. (strain YO3AOP1) protein is Pyridoxine 5'-phosphate synthase.